We begin with the raw amino-acid sequence, 358 residues long: Methylthioribose-1-phosphate isomerase (358 aa).

Residues 54–56 (RGA), R96, and Q205 each bind substrate. D246 serves as the catalytic Proton donor. A substrate-binding site is contributed by 256 to 257 (NK).

The protein belongs to the eIF-2B alpha/beta/delta subunits family. MtnA subfamily.

The catalysed reaction is 5-(methylsulfanyl)-alpha-D-ribose 1-phosphate = 5-(methylsulfanyl)-D-ribulose 1-phosphate. Its pathway is amino-acid biosynthesis; L-methionine biosynthesis via salvage pathway; L-methionine from S-methyl-5-thio-alpha-D-ribose 1-phosphate: step 1/6. In terms of biological role, catalyzes the interconversion of methylthioribose-1-phosphate (MTR-1-P) into methylthioribulose-1-phosphate (MTRu-1-P). This Stutzerimonas stutzeri (strain A1501) (Pseudomonas stutzeri) protein is Methylthioribose-1-phosphate isomerase.